The primary structure comprises 273 residues: Large ribosomal subunit protein uL2 (273 aa).

Residues 221-273 (RGTAMNPVDHPHGGGEGRNFGKHPVTPWGIQTKGKKTRSNKRTDKFIVRRRSK) are disordered.

The protein belongs to the universal ribosomal protein uL2 family. In terms of assembly, part of the 50S ribosomal subunit. Forms a bridge to the 30S subunit in the 70S ribosome.

One of the primary rRNA binding proteins. Required for association of the 30S and 50S subunits to form the 70S ribosome, for tRNA binding and peptide bond formation. It has been suggested to have peptidyltransferase activity; this is somewhat controversial. Makes several contacts with the 16S rRNA in the 70S ribosome. This is Large ribosomal subunit protein uL2 from Sodalis glossinidius (strain morsitans).